Here is a 380-residue protein sequence, read N- to C-terminus: Alcohol dehydrogenase-like 4 (380 aa).

Residues Cys-47, Thr-49, His-70, Cys-100, Cys-103, Cys-106, Cys-114, and Cys-180 each contribute to the Zn(2+) site. Positions 49 and 70 each coordinate an alcohol. Thr-49 contributes to the NAD(+) binding site. Residues 205 to 210 (GLGAVG), Asp-229, Lys-234, 298 to 300 (LGV), Phe-325, and Arg-375 each bind NAD(+).

The protein belongs to the zinc-containing alcohol dehydrogenase family. Class-III subfamily. As to quaternary structure, homodimer. Zn(2+) is required as a cofactor.

It localises to the cytoplasm. The enzyme catalyses a primary alcohol + NAD(+) = an aldehyde + NADH + H(+). It catalyses the reaction a secondary alcohol + NAD(+) = a ketone + NADH + H(+). The chain is Alcohol dehydrogenase-like 4 from Arabidopsis thaliana (Mouse-ear cress).